The chain runs to 160 residues: Transcription elongation factor GreA (160 aa).

Residues 2–81 (AEKKNILTYE…KNAEVVVEDE (80 aa)) are a coiled coil. The segment at 36–55 (KEAREQGDLSENAEYDAAKD) is disordered.

It belongs to the GreA/GreB family.

Necessary for efficient RNA polymerase transcription elongation past template-encoded arresting sites. The arresting sites in DNA have the property of trapping a certain fraction of elongating RNA polymerases that pass through, resulting in locked ternary complexes. Cleavage of the nascent transcript by cleavage factors such as GreA or GreB allows the resumption of elongation from the new 3'terminus. GreA releases sequences of 2 to 3 nucleotides. The polypeptide is Transcription elongation factor GreA (Lachnoclostridium phytofermentans (strain ATCC 700394 / DSM 18823 / ISDg) (Clostridium phytofermentans)).